Here is a 279-residue protein sequence, read N- to C-terminus: Prohibitin-4, mitochondrial (279 aa).

An N-acetylglycine modification is found at G2. Over 2 to 6 (GSQQV) the chain is Mitochondrial matrix. The helical; Signal-anchor for type II membrane protein transmembrane segment at 7-28 (AISFLTNLAKAAFGLGVAATAL) threads the bilayer. Over 29-279 (NSSLYTVDGG…SMLFNLNPGR (251 aa)) the chain is Mitochondrial intermembrane.

It belongs to the prohibitin family. In terms of assembly, component of a prohibitin multimeric complex in mitochondrial membranes. As to expression, mostly expressed in proliferative tissues, including vasculature, shoot and root apical tissues. Accumulates in dry seeds.

It localises to the mitochondrion inner membrane. In terms of biological role, prohibitin probably acts as a holdase/unfoldase for the stabilization of newly synthesized mitochondrial proteins. This chain is Prohibitin-4, mitochondrial (PHB4), found in Arabidopsis thaliana (Mouse-ear cress).